A 208-amino-acid polypeptide reads, in one-letter code: MPPSHSVAQIRDAERQTLATGRRLMPLAGAAAARHVAARIRPGAVVLALAGPGNNGGDALEAATGLRAMGHDVRVLLPSGAQGLPADAARAYAGWQAAGGETWSTLEPGFVPGLVIDGLFGIGLNRPLGADWQALVDTVNAWNVPVLALDVPSGIDADSGEALGRPIQARWTLSFIGRARGLERPGPGRDACGISEVDTLGVIMTPAN.

The YjeF N-terminal domain occupies 10-208; it reads IRDAERQTLA…TLGVIMTPAN (199 aa). Residue 54-58 participates in (6S)-NADPHX binding; it reads NNGGD. N55 and D117 together coordinate K(+). Residues 121–127 and D150 each bind (6S)-NADPHX; that span reads GIGLNRP. S153 lines the K(+) pocket.

Belongs to the NnrE/AIBP family. It depends on K(+) as a cofactor.

The catalysed reaction is (6R)-NADHX = (6S)-NADHX. The enzyme catalyses (6R)-NADPHX = (6S)-NADPHX. In terms of biological role, catalyzes the epimerization of the S- and R-forms of NAD(P)HX, a damaged form of NAD(P)H that is a result of enzymatic or heat-dependent hydration. This is a prerequisite for the S-specific NAD(P)H-hydrate dehydratase to allow the repair of both epimers of NAD(P)HX. The protein is NAD(P)H-hydrate epimerase of Achromobacter xylosoxidans (strain A8).